A 110-amino-acid polypeptide reads, in one-letter code: Protein YcgL (110 aa).

The 85-residue stretch at 14–98 folds into the YcgL domain; it reads MFCVIYRSSK…PPEDLLKQHL (85 aa). Positions 88–110 are disordered; sequence PPPEDLLKQHLSSVGQNTSPADR. The segment covering 97-110 has biased composition (polar residues); sequence HLSSVGQNTSPADR.

The protein is Protein YcgL of Salmonella paratyphi A (strain ATCC 9150 / SARB42).